Consider the following 408-residue polypeptide: Subtilisin-like protease 6 (408 aa).

Positions Met-1–Gly-20 are cleaved as a signal peptide. Positions Ala-21–Ile-123 are excised as a propeptide. The region spanning Lys-36 to Lys-119 is the Inhibitor I9 domain. Residues Ser-131–Lys-408 enclose the Peptidase S8 domain. Active-site charge relay system residues include Asp-163 and His-194. Residues Asn-248, Asn-260, and Asn-345 are each glycosylated (N-linked (GlcNAc...) asparagine). Catalysis depends on Ser-354, which acts as the Charge relay system. A glycan (N-linked (GlcNAc...) asparagine) is linked at Asn-404.

It belongs to the peptidase S8 family.

Its subcellular location is the secreted. In terms of biological role, secreted subtilisin-like serine protease with keratinolytic activity that contributes to pathogenicity. The protein is Subtilisin-like protease 6 (SUB6) of Arthroderma gypseum (strain ATCC MYA-4604 / CBS 118893) (Microsporum gypseum).